The chain runs to 1377 residues: Hemoglobin-binding protease hbp autotransporter (1377 aa).

The signal sequence occupies residues 1–52; it reads MNRIYSLRYSAVARGFIAVSEFARKCVHKSVRRLCFPVLLLIPVLFSAGSLA. Residues 53-302 form the Peptidase S6 domain; sequence GTVNNELGYQ…AVIPLDFIGQ (250 aa). Residues histidine 125, aspartate 153, and serine 259 each act as charge relay system in the active site. Residues 1111-1377 enclose the Autotransporter domain; the sequence is DINGEAGTWV…AINANIRYSF (267 aa).

Post-translationally, cleaved to release the mature protein from the outer membrane.

The protein resides in the periplasm. The protein localises to the secreted. Its subcellular location is the cell surface. It localises to the cell outer membrane. With respect to regulation, protease activity is inhibited by 3,4-dichloroisocoumarin. Functionally, interacts with hemoglobin, degrades it and subsequently binds the released heme. Could make heme accessible not only for E.coli, but also for B.fragilis during mixed intra-abdominal infections. Has a role in abscess formation. The polypeptide is Hemoglobin-binding protease hbp autotransporter (hbp) (Escherichia coli).